Consider the following 85-residue polypeptide: Large ribosomal subunit protein bL31B (85 aa).

It belongs to the bacterial ribosomal protein bL31 family. Type B subfamily. As to quaternary structure, part of the 50S ribosomal subunit.

This Staphylococcus haemolyticus (strain JCSC1435) protein is Large ribosomal subunit protein bL31B.